A 292-amino-acid polypeptide reads, in one-letter code: 4-hydroxybenzoate octaprenyltransferase (292 aa).

9 helical membrane passes run 24-44, 47-67, 97-117, 119-139, 145-165, 171-191, 214-234, 238-258, and 270-290; these read IGTL…NAGM, LTNF…GCVI, AISL…MLSV, TILL…MKRY, VVLG…SINA, WLLF…YAMV, HIIG…GALN, LSYW…QVLI, and FLNN…SYPV.

The protein belongs to the UbiA prenyltransferase family. Requires Mg(2+) as cofactor.

It is found in the cell inner membrane. The catalysed reaction is all-trans-octaprenyl diphosphate + 4-hydroxybenzoate = 4-hydroxy-3-(all-trans-octaprenyl)benzoate + diphosphate. It participates in cofactor biosynthesis; ubiquinone biosynthesis. Functionally, catalyzes the prenylation of para-hydroxybenzoate (PHB) with an all-trans polyprenyl group. Mediates the second step in the final reaction sequence of ubiquinone-8 (UQ-8) biosynthesis, which is the condensation of the polyisoprenoid side chain with PHB, generating the first membrane-bound Q intermediate 3-octaprenyl-4-hydroxybenzoate. This is 4-hydroxybenzoate octaprenyltransferase from Pseudoalteromonas translucida (strain TAC 125).